We begin with the raw amino-acid sequence, 345 residues long: Tetraacyldisaccharide 4'-kinase (345 aa).

61–68 (TAGGTGKT) contacts ATP.

The protein belongs to the LpxK family.

It carries out the reaction a lipid A disaccharide + ATP = a lipid IVA + ADP + H(+). It functions in the pathway glycolipid biosynthesis; lipid IV(A) biosynthesis; lipid IV(A) from (3R)-3-hydroxytetradecanoyl-[acyl-carrier-protein] and UDP-N-acetyl-alpha-D-glucosamine: step 6/6. Its function is as follows. Transfers the gamma-phosphate of ATP to the 4'-position of a tetraacyldisaccharide 1-phosphate intermediate (termed DS-1-P) to form tetraacyldisaccharide 1,4'-bis-phosphate (lipid IVA). This Xanthomonas euvesicatoria pv. vesicatoria (strain 85-10) (Xanthomonas campestris pv. vesicatoria) protein is Tetraacyldisaccharide 4'-kinase.